Consider the following 248-residue polypeptide: Pulmonary surfactant-associated protein A (248 aa).

Positions 1–17 (MLLCSLTLMLLWMVASG) are cleaved as a signal peptide. The Collagen-like domain occupies 28–100 (GSPGIPGTPG…PGERGPPGFP (73 aa)). Positions 29-103 (SPGIPGTPGS…RGPPGFPAYL (75 aa)) are disordered. The span at 42-51 (PGRDGRDGIK) shows a compositional bias: basic and acidic residues. The span at 54 to 65 (PGPPGPMGPPGG) shows a compositional bias: pro residues. The span at 69 to 82 (LPGRDGMTGAPGLP) shows a compositional bias: low complexity. The span at 84-93 (ERGEKGEPGE) shows a compositional bias: basic and acidic residues. The C-type lectin domain occupies 127–247 (LQGSMLEVGE…CLQYRLAICE (121 aa)). 2 cysteine pairs are disulfide-bonded: Cys-155-Cys-246 and Cys-224-Cys-238. A glycan (N-linked (GlcNAc...) asparagine) is linked at Asn-207. Ca(2+) is bound by residues Glu-215, Arg-217, Asn-234, and Asp-235.

This sequence belongs to the SFTPA family. In terms of assembly, oligomeric complex of 6 set of homotrimers.

It is found in the secreted. The protein localises to the extracellular space. Its subcellular location is the extracellular matrix. It localises to the surface film. In presence of calcium ions, it binds to surfactant phospholipids and contributes to lower the surface tension at the air-liquid interface in the alveoli of the mammalian lung and is essential for normal respiration. Enhances the expression of MYO18A/SP-R210 on alveolar macrophages. This is Pulmonary surfactant-associated protein A (SFTPA1) from Ovis aries (Sheep).